The following is a 677-amino-acid chain: Protein PALS1 (677 aa).

Residues 1–347 (MTTSHMNGYV…AQIKSPPIKE (347 aa)) are required for the correct localization of PALS1 and PATJ at cell-cell contacts and the normal formation of tight junctions and adherens junctions. The interval 39-81 (ELGARTLPVRRSAQLEKIRQQQEDRRRREEEGRSRQELDLNSS) is disordered. Residues 51–76 (AQLEKIRQQQEDRRRREEEGRSRQEL) show a composition bias toward basic and acidic residues. L27 domains are found at residues 121-178 (ALLE…NRPS) and 180-236 (PYPL…MQLE). Positions 258-338 (IVRIEKAKDI…VLSFVLIPSA (81 aa)) constitute a PDZ domain. The SH3 domain maps to 347 to 419 (ETVVHVKAHF…PGKSFQQQRE (73 aa)). The Guanylate kinase-like domain maps to 481 to 662 (KRPIALIGPP…SYQELLRLIN (182 aa)). Residue 488 to 495 (GPPNCGQN) participates in ATP binding. Residues 506 to 526 (PDRFAGPVPHTTRSRRDAEAN) are disordered.

This sequence belongs to the MAGUK family. Expressed in the retina and in the neural tube.

It is found in the apical cell membrane. Its subcellular location is the cell junction. The protein localises to the tight junction. Plays a role in tight junction biogenesis and in the establishment of cell polarity in epithelial cells. Also involved in adherens junction biogenesis. Required for polarized epithelial organization, cell-cell adhesion and remodeling of myocardial cells during heart tube elongation during embryogenesis. Functions in cellular patterning of the retina and development of the retinal pigmented epithelium. Also required for embryo body axis specification. This Danio rerio (Zebrafish) protein is Protein PALS1 (pals1a).